Consider the following 198-residue polypeptide: ATP-dependent Clp protease proteolytic subunit (198 aa).

The Nucleophile role is filled by Ser-98. His-123 is an active-site residue.

Belongs to the peptidase S14 family. Fourteen ClpP subunits assemble into 2 heptameric rings which stack back to back to give a disk-like structure with a central cavity, resembling the structure of eukaryotic proteasomes.

Its subcellular location is the cytoplasm. The catalysed reaction is Hydrolysis of proteins to small peptides in the presence of ATP and magnesium. alpha-casein is the usual test substrate. In the absence of ATP, only oligopeptides shorter than five residues are hydrolyzed (such as succinyl-Leu-Tyr-|-NHMec, and Leu-Tyr-Leu-|-Tyr-Trp, in which cleavage of the -Tyr-|-Leu- and -Tyr-|-Trp bonds also occurs).. In terms of biological role, cleaves peptides in various proteins in a process that requires ATP hydrolysis. Has a chymotrypsin-like activity. Plays a major role in the degradation of misfolded proteins. The polypeptide is ATP-dependent Clp protease proteolytic subunit (Listeria monocytogenes serovar 1/2a (strain ATCC BAA-679 / EGD-e)).